A 623-amino-acid polypeptide reads, in one-letter code: Dictomallein-5 (623 aa).

The N-terminal stretch at 1 to 21 is a signal peptide; the sequence is MKIFIIKIILVLFNYVLLSYS. A Peptidase M66 domain is found at 174–435; sequence PNVGQDYTLK…QNYFKNSIYY (262 aa). His327 contacts Zn(2+). Residue Glu328 is part of the active site. Zn(2+) contacts are provided by His331 and His337.

It belongs to the dictomallein family. Zn(2+) serves as cofactor.

The protein localises to the secreted. This chain is Dictomallein-5 (dtmlE), found in Dictyostelium discoideum (Social amoeba).